We begin with the raw amino-acid sequence, 87 residues long: UPF0248 protein TON_0940 (87 aa).

This sequence belongs to the UPF0248 family.

In Thermococcus onnurineus (strain NA1), this protein is UPF0248 protein TON_0940.